Reading from the N-terminus, the 267-residue chain is Thymidylate synthase (267 aa).

DUMP is bound at residue Arg24. (6R)-5,10-methylene-5,6,7,8-tetrahydrofolate is bound at residue His54. 129-130 (RR) is a dUMP binding site. Cys149 functions as the Nucleophile in the catalytic mechanism. DUMP is bound by residues 169 to 172 (RSAD), Asn180, and 210 to 212 (HVY). Asp172 is a (6R)-5,10-methylene-5,6,7,8-tetrahydrofolate binding site. Ala266 is a (6R)-5,10-methylene-5,6,7,8-tetrahydrofolate binding site.

The protein belongs to the thymidylate synthase family. Bacterial-type ThyA subfamily. As to quaternary structure, homodimer.

It localises to the cytoplasm. The catalysed reaction is dUMP + (6R)-5,10-methylene-5,6,7,8-tetrahydrofolate = 7,8-dihydrofolate + dTMP. It functions in the pathway pyrimidine metabolism; dTTP biosynthesis. In terms of biological role, catalyzes the reductive methylation of 2'-deoxyuridine-5'-monophosphate (dUMP) to 2'-deoxythymidine-5'-monophosphate (dTMP) while utilizing 5,10-methylenetetrahydrofolate (mTHF) as the methyl donor and reductant in the reaction, yielding dihydrofolate (DHF) as a by-product. This enzymatic reaction provides an intracellular de novo source of dTMP, an essential precursor for DNA biosynthesis. The chain is Thymidylate synthase from Paenarthrobacter aurescens (strain TC1).